A 444-amino-acid polypeptide reads, in one-letter code: Phosphoribosylamine--glycine ligase (444 aa).

Positions 109–324 (RNLFKKYNIK…FLEVCEAIVN (216 aa)) constitute an ATP-grasp domain. 140–202 (LTEKGIKAVV…EEKLEGVEFT (63 aa)) contacts ATP. The Mg(2+) site is built by Q282, E294, and N296. Mn(2+) is bound by residues Q282, E294, and N296.

It belongs to the GARS family. Mg(2+) serves as cofactor. Mn(2+) is required as a cofactor.

It carries out the reaction 5-phospho-beta-D-ribosylamine + glycine + ATP = N(1)-(5-phospho-beta-D-ribosyl)glycinamide + ADP + phosphate + H(+). It functions in the pathway purine metabolism; IMP biosynthesis via de novo pathway; N(1)-(5-phospho-D-ribosyl)glycinamide from 5-phospho-alpha-D-ribose 1-diphosphate: step 2/2. This chain is Phosphoribosylamine--glycine ligase, found in Methanocaldococcus jannaschii (strain ATCC 43067 / DSM 2661 / JAL-1 / JCM 10045 / NBRC 100440) (Methanococcus jannaschii).